The chain runs to 354 residues: MRFDLEPPSSTAAAHRIGVLLINLGTPDAPTPRAVRRYLAEFLSDPRVVEIPQAVWQVLLRTLILPLRGRASAKKYAAVWMPEGSPLRVYTERQTDSVRHLLTSNGYHVMVDYAMRYGSPNISHALAQFKRAGVERVLLMPMYPQYSASTTATAFDAAFDALARMRNQPEVRTVRHYADHPAYIHALAEQVRQYWAQHGRPDFAAGDKLVLSFHGVPKRTLDLGDPYHDQCQQTGALLTAALGLSTTECRVTFQSRFGKAEWLQPYTAPTLREFGEAGVRRADVFCPGFTADCLETIEEIGMEVRDEFLAGGGKAFHRIPCLNGAPAWIGALGEIVAENLQGWPVRAAQPETVS.

Positions 214 and 295 each coordinate Fe cation.

The protein belongs to the ferrochelatase family.

It localises to the cytoplasm. It carries out the reaction heme b + 2 H(+) = protoporphyrin IX + Fe(2+). Its pathway is porphyrin-containing compound metabolism; protoheme biosynthesis; protoheme from protoporphyrin-IX: step 1/1. Functionally, catalyzes the ferrous insertion into protoporphyrin IX. The polypeptide is Ferrochelatase (Burkholderia lata (strain ATCC 17760 / DSM 23089 / LMG 22485 / NCIMB 9086 / R18194 / 383)).